The sequence spans 432 residues: C4-dicarboxylate transport protein (432 aa).

The next 8 helical transmembrane spans lie at 8-28 (ILYV…HYWP), 44-64 (LIKM…IAGM), 78-98 (LLYF…AAHL), 148-168 (GDIL…AVLG), 188-208 (IVHV…AFTI), 222-242 (LIGT…GTIA), 307-327 (IYMT…LTLM), and 355-375 (AATL…ILGI).

This sequence belongs to the dicarboxylate/amino acid:cation symporter (DAACS) (TC 2.A.23) family.

It is found in the cell inner membrane. Functionally, responsible for the transport of dicarboxylates such as succinate, fumarate, and malate from the periplasm across the membrane. This chain is C4-dicarboxylate transport protein, found in Cupriavidus necator (strain ATCC 17699 / DSM 428 / KCTC 22496 / NCIMB 10442 / H16 / Stanier 337) (Ralstonia eutropha).